The primary structure comprises 291 residues: Gamma-sarcoglycan (291 aa).

Over 1-37 (MVREQYTTVTEGTHIERPENQHIYKIGIYGWRKRCLY) the chain is Cytoplasmic. A helical; Signal-anchor for type II membrane protein membrane pass occupies residues 38–58 (LFVLLLLAILVVNLALTIWIL). At 59-291 (KVMWFSPIGM…TCEEHSHVCL (233 aa)) the chain is on the extracellular side. Residue Asn-110 is glycosylated (N-linked (GlcNAc...) asparagine). 2 cysteine pairs are disulfide-bonded: Cys-265-Cys-290 and Cys-267-Cys-283.

This sequence belongs to the sarcoglycan beta/delta/gamma/zeta family. Interacts with the syntrophin SNTA1 and FLNC. Cross-link to form 2 major subcomplexes: one consisting of SGCB, SGCD and SGCG and the other consisting of SGCB and SGCD. The association between SGCB and SGCG is particularly strong while SGCA is loosely associated with the other sarcoglycans. In terms of tissue distribution, most strongly expressed in skeletal and heart muscle. Also detected in proliferating myoblasts.

The protein localises to the cell membrane. Its subcellular location is the sarcolemma. It is found in the cytoplasm. The protein resides in the cytoskeleton. Its function is as follows. Component of the sarcoglycan complex, a subcomplex of the dystrophin-glycoprotein complex which forms a link between the F-actin cytoskeleton and the extracellular matrix. The sequence is that of Gamma-sarcoglycan (Sgcg) from Mus musculus (Mouse).